The following is a 124-amino-acid chain: Small ribosomal subunit protein uS12 (124 aa).

D89 is subject to 3-methylthioaspartic acid. Residues 102 to 124 (LDTSGVNNRKHGRSKYGTKRPKS) form a disordered region. Basic residues predominate over residues 109-124 (NRKHGRSKYGTKRPKS).

It belongs to the universal ribosomal protein uS12 family. As to quaternary structure, part of the 30S ribosomal subunit. Contacts proteins S8 and S17. May interact with IF1 in the 30S initiation complex.

Functionally, with S4 and S5 plays an important role in translational accuracy. In terms of biological role, interacts with and stabilizes bases of the 16S rRNA that are involved in tRNA selection in the A site and with the mRNA backbone. Located at the interface of the 30S and 50S subunits, it traverses the body of the 30S subunit contacting proteins on the other side and probably holding the rRNA structure together. The combined cluster of proteins S8, S12 and S17 appears to hold together the shoulder and platform of the 30S subunit. In Francisella philomiragia subsp. philomiragia (strain ATCC 25017 / CCUG 19701 / FSC 153 / O#319-036), this protein is Small ribosomal subunit protein uS12.